We begin with the raw amino-acid sequence, 235 residues long: Leucyl/phenylalanyl-tRNA--protein transferase (235 aa).

This sequence belongs to the L/F-transferase family.

Its subcellular location is the cytoplasm. It carries out the reaction N-terminal L-lysyl-[protein] + L-leucyl-tRNA(Leu) = N-terminal L-leucyl-L-lysyl-[protein] + tRNA(Leu) + H(+). The catalysed reaction is N-terminal L-arginyl-[protein] + L-leucyl-tRNA(Leu) = N-terminal L-leucyl-L-arginyl-[protein] + tRNA(Leu) + H(+). The enzyme catalyses L-phenylalanyl-tRNA(Phe) + an N-terminal L-alpha-aminoacyl-[protein] = an N-terminal L-phenylalanyl-L-alpha-aminoacyl-[protein] + tRNA(Phe). In terms of biological role, functions in the N-end rule pathway of protein degradation where it conjugates Leu, Phe and, less efficiently, Met from aminoacyl-tRNAs to the N-termini of proteins containing an N-terminal arginine or lysine. In Anaeromyxobacter sp. (strain Fw109-5), this protein is Leucyl/phenylalanyl-tRNA--protein transferase.